Consider the following 281-residue polypeptide: tRNA uridine(34) hydroxylase (281 aa).

In terms of domain architecture, Rhodanese spans 125–222; that stretch reads AREDVKTIDT…YFLKTKNKDG (98 aa). Residue Cys-182 is the Cysteine persulfide intermediate of the active site.

Belongs to the TrhO family.

It catalyses the reaction uridine(34) in tRNA + AH2 + O2 = 5-hydroxyuridine(34) in tRNA + A + H2O. Functionally, catalyzes oxygen-dependent 5-hydroxyuridine (ho5U) modification at position 34 in tRNAs. The protein is tRNA uridine(34) hydroxylase of Neorickettsia sennetsu (strain ATCC VR-367 / Miyayama) (Ehrlichia sennetsu).